The primary structure comprises 360 residues: Arginase, non-hepatic 1 (360 aa).

His122, Asp145, His147, and Asp149 together coordinate Mn(2+). Substrate contacts are provided by residues 147 to 151 (HADIN), 158 to 160 (SGN), and Asp204. Residues Asp253 and Asp255 each contribute to the Mn(2+) site. Substrate contacts are provided by Thr267 and Glu298.

It belongs to the arginase family. In terms of assembly, homotrimer. Requires Mn(2+) as cofactor. Expressed at differing tadpole stages in tail, intestine, hindlimb and trunk region. Most abundant in tadpole tail.

The enzyme catalyses L-arginine + H2O = urea + L-ornithine. It participates in nitrogen metabolism; urea cycle; L-ornithine and urea from L-arginine: step 1/1. Functionally, as well as its role in the urea cycle, may be involved in tissue remodeling. The chain is Arginase, non-hepatic 1 (arg2-a) from Xenopus laevis (African clawed frog).